A 512-amino-acid chain; its full sequence is Histidine ammonia-lyase (512 aa).

A cross-link (5-imidazolinone (Ala-Gly)) is located at residues alanine 142–glycine 144. The residue at position 143 (serine 143) is a 2,3-didehydroalanine (Ser).

This sequence belongs to the PAL/histidase family. Post-translationally, contains an active site 4-methylidene-imidazol-5-one (MIO), which is formed autocatalytically by cyclization and dehydration of residues Ala-Ser-Gly.

The protein resides in the cytoplasm. The catalysed reaction is L-histidine = trans-urocanate + NH4(+). It participates in amino-acid degradation; L-histidine degradation into L-glutamate; N-formimidoyl-L-glutamate from L-histidine: step 1/3. The polypeptide is Histidine ammonia-lyase (Bartonella tribocorum (strain CIP 105476 / IBS 506)).